The chain runs to 265 residues: Hydroxyethylthiazole kinase 2 (265 aa).

Methionine 39 provides a ligand contact to substrate. ATP contacts are provided by lysine 115 and threonine 168. A substrate-binding site is contributed by glycine 195.

It belongs to the Thz kinase family. Mg(2+) is required as a cofactor.

It catalyses the reaction 5-(2-hydroxyethyl)-4-methylthiazole + ATP = 4-methyl-5-(2-phosphooxyethyl)-thiazole + ADP + H(+). It functions in the pathway cofactor biosynthesis; thiamine diphosphate biosynthesis; 4-methyl-5-(2-phosphoethyl)-thiazole from 5-(2-hydroxyethyl)-4-methylthiazole: step 1/1. Its function is as follows. Catalyzes the phosphorylation of the hydroxyl group of 4-methyl-5-beta-hydroxyethylthiazole (THZ). This Clostridium botulinum (strain Kyoto / Type A2) protein is Hydroxyethylthiazole kinase 2.